The primary structure comprises 182 residues: ADP-ribosylation factor-like protein 3 (182 aa).

Gly2 carries the N-myristoyl glycine lipid modification. Phosphoserine is present on Ser5. GTP contacts are provided by residues 24 to 31 (GLDNAGKT), Thr48, 67 to 71 (DIGGQ), Gly70, 126 to 129 (NKQD), and 159 to 161 (SAL). Mg(2+)-binding residues include Thr31 and Thr48.

The protein belongs to the small GTPase superfamily. Arf family. In terms of assembly, found in a complex with ARL3, RP2 and UNC119 (or UNC119B); RP2 induces hydrolysis of GTP ARL3 in the complex, leading to the release of UNC119 (or UNC119B). Interacts with RP2; interaction is direct and stimulated with the activated GTP-bound form of ARL3. Interacts with SYS1. Interacts with ARL2BP; the GTP-bound form interacts with ARL2BP. Microtubule-associated protein. Does not interact with TBCC. Interacts with RP2. Interacts with PDE6D; the interaction occurs specifically with the GTP-bound form of ARL3. Interacts with GGA1; the interaction recruits PKD1:PKD2 complex to trans-Golgi network and is required for ciliary targeting of PKD1:PKD2 complex. Interacts with DNAAF9.

The protein localises to the golgi apparatus membrane. The protein resides in the cytoplasm. It localises to the cytoskeleton. It is found in the spindle. Its subcellular location is the nucleus. The protein localises to the microtubule organizing center. The protein resides in the centrosome. It localises to the cell projection. It is found in the cilium. Functionally, small GTP-binding protein which cycles between an inactive GDP-bound and an active GTP-bound form, and the rate of cycling is regulated by guanine nucleotide exchange factors (GEF) and GTPase-activating proteins (GAP). Required for normal cytokinesis and cilia signaling. Requires assistance from GTPase-activating proteins (GAPs) like RP2 and PDE6D, in order to cycle between inactive GDP-bound and active GTP-bound forms. Required for targeting proteins to the cilium, including myristoylated NPHP3 and prenylated INPP5E. Targets NPHP3 to the ciliary membrane by releasing myristoylated NPHP3 from UNC119B cargo adapter into the cilium. Required for PKD1:PKD2 complex targeting from the trans-Golgi network to the cilium. The protein is ADP-ribosylation factor-like protein 3 (Arl3) of Rattus norvegicus (Rat).